The chain runs to 396 residues: Cathepsin E (396 aa).

Residues 1–19 form the signal peptide; it reads MKTLPLLLLLLLDLGQAQG. The propeptide at 20 to 53 is activation peptide; the sequence is TLDRVPLRRQPSLRKKLRAQGQLSEFWKAHKVDM. In terms of domain architecture, Peptidase A1 spans 78 to 392; sequence YFGTISIGSP…DRGSNRVGLA (315 aa). N-linked (GlcNAc...) asparagine glycosylation is present at Asn90. Residue Asp96 is part of the active site. Cystine bridges form between Cys109–Cys114 and Cys272–Cys276. The active site involves Asp281. Cysteines 314 and 351 form a disulfide.

Belongs to the peptidase A1 family. Homodimer; disulfide-linked. Glycosylated. The nature of the carbohydrate chain varies between cell types.

The protein resides in the endosome. It catalyses the reaction Similar to cathepsin D, but slightly broader specificity.. Functionally, may have a role in immune function. Probably involved in the processing of antigenic peptides during MHC class II-mediated antigen presentation. May play a role in activation-induced lymphocyte depletion in the thymus, and in neuronal degeneration and glial cell activation in the brain. This Oryctolagus cuniculus (Rabbit) protein is Cathepsin E (CTSE).